The chain runs to 338 residues: Biotin synthase (338 aa).

A Radical SAM core domain is found at 50–277 (QAVQLSTLMS…KSYVRLSAGR (228 aa)). Residues cysteine 65, cysteine 69, and cysteine 72 each coordinate [4Fe-4S] cluster. [2Fe-2S] cluster-binding residues include cysteine 109, cysteine 140, cysteine 200, and arginine 272.

It belongs to the radical SAM superfamily. Biotin synthase family. As to quaternary structure, homodimer. [4Fe-4S] cluster is required as a cofactor. Requires [2Fe-2S] cluster as cofactor.

It carries out the reaction (4R,5S)-dethiobiotin + (sulfur carrier)-SH + 2 reduced [2Fe-2S]-[ferredoxin] + 2 S-adenosyl-L-methionine = (sulfur carrier)-H + biotin + 2 5'-deoxyadenosine + 2 L-methionine + 2 oxidized [2Fe-2S]-[ferredoxin]. It participates in cofactor biosynthesis; biotin biosynthesis; biotin from 7,8-diaminononanoate: step 2/2. In terms of biological role, catalyzes the conversion of dethiobiotin (DTB) to biotin by the insertion of a sulfur atom into dethiobiotin via a radical-based mechanism. The chain is Biotin synthase from Actinobacillus succinogenes (strain ATCC 55618 / DSM 22257 / CCUG 43843 / 130Z).